The primary structure comprises 322 residues: Tetraacyldisaccharide 4'-kinase (322 aa).

An ATP-binding site is contributed by 40-47 (CVGGTGKT).

It belongs to the LpxK family.

It carries out the reaction a lipid A disaccharide + ATP = a lipid IVA + ADP + H(+). It participates in glycolipid biosynthesis; lipid IV(A) biosynthesis; lipid IV(A) from (3R)-3-hydroxytetradecanoyl-[acyl-carrier-protein] and UDP-N-acetyl-alpha-D-glucosamine: step 6/6. Its function is as follows. Transfers the gamma-phosphate of ATP to the 4'-position of a tetraacyldisaccharide 1-phosphate intermediate (termed DS-1-P) to form tetraacyldisaccharide 1,4'-bis-phosphate (lipid IVA). This Koribacter versatilis (strain Ellin345) protein is Tetraacyldisaccharide 4'-kinase.